Reading from the N-terminus, the 572-residue chain is Proteinaceous RNase P 1, chloroplastic/mitochondrial (572 aa).

A chloroplast and mitochondrion-targeting transit peptide spans 1 to 70 (MLRLTCFTPS…SRHLCTLPLA (70 aa)). PPR repeat units follow at residues 96–130 (PEAL…GVQL), 136–174 (NVLL…KVVP), 175–209 (NEAT…GIQP), and 210–244 (RLRS…EVVP). The PRORP domain occupies 338 to 565 (MDENGVCKCC…DLQTSRQWLC (228 aa)). Zn(2+) contacts are provided by Cys-344 and Cys-347. The Mn(2+) site is built by Asp-399, Asp-474, Asp-475, and Asp-493. Residues His-548 and Cys-565 each contribute to the Zn(2+) site.

The protein belongs to the PPR family. P subfamily. Requires Mg(2+) as cofactor. Mn(2+) serves as cofactor.

The protein localises to the mitochondrion. It is found in the plastid. Its subcellular location is the chloroplast. It carries out the reaction Endonucleolytic cleavage of RNA, removing 5'-extranucleotides from tRNA precursor.. Endonuclease RNase P responsible for the 5' maturation of tRNA precursors. Preferentially cleaves at the unusual cleavage site, but also able to cleave at the classical cleavage site. Also involved in the maturation of mRNAs in mitochondria. The polypeptide is Proteinaceous RNase P 1, chloroplastic/mitochondrial (PRORP1) (Arabidopsis thaliana (Mouse-ear cress)).